Reading from the N-terminus, the 200-residue chain is Holliday junction branch migration complex subunit RuvA (200 aa).

The interval 1–65 is domain I; the sequence is MYEYIKGTLT…ETEHVLYGFS (65 aa). Positions 66 to 144 are domain II; that stretch reads SRAEKECFRL…TLMPLYLEEP (79 aa). Residues 145–149 are flexible linker; the sequence is VVPSS. Positions 150–200 are domain III; it reads TANSSFKEGIGALMNLGFSRLAADRMMTEAVKELSEEASVAELLPIALRKS.

The protein belongs to the RuvA family. In terms of assembly, homotetramer. Forms an RuvA(8)-RuvB(12)-Holliday junction (HJ) complex. HJ DNA is sandwiched between 2 RuvA tetramers; dsDNA enters through RuvA and exits via RuvB. An RuvB hexamer assembles on each DNA strand where it exits the tetramer. Each RuvB hexamer is contacted by two RuvA subunits (via domain III) on 2 adjacent RuvB subunits; this complex drives branch migration. In the full resolvosome a probable DNA-RuvA(4)-RuvB(12)-RuvC(2) complex forms which resolves the HJ.

The protein resides in the cytoplasm. The RuvA-RuvB-RuvC complex processes Holliday junction (HJ) DNA during genetic recombination and DNA repair, while the RuvA-RuvB complex plays an important role in the rescue of blocked DNA replication forks via replication fork reversal (RFR). RuvA specifically binds to HJ cruciform DNA, conferring on it an open structure. The RuvB hexamer acts as an ATP-dependent pump, pulling dsDNA into and through the RuvAB complex. HJ branch migration allows RuvC to scan DNA until it finds its consensus sequence, where it cleaves and resolves the cruciform DNA. In Chlamydia trachomatis serovar A (strain ATCC VR-571B / DSM 19440 / HAR-13), this protein is Holliday junction branch migration complex subunit RuvA.